The chain runs to 186 residues: Allergen Fel d 4 (186 aa).

The signal sequence occupies residues 1–15 (MKLLLLCLGLILVCA). N-linked (GlcNAc...) asparagine glycosylation is found at Asn51 and Asn66. Residues Cys81 and Cys171 are joined by a disulfide bond.

It belongs to the calycin superfamily. Lipocalin family. In terms of tissue distribution, abundant in urine (at protein level).

Its subcellular location is the secreted. Functionally, may be a pheromone carrier. Acts as a kairomone, detected by the prey vomeronasal organ and inducing fear reactions in mice. In Felis catus (Cat), this protein is Allergen Fel d 4.